A 1823-amino-acid polypeptide reads, in one-letter code: Vitellogenin (1823 aa).

A signal peptide spans 1–14; that stretch reads MWKLLLVALAFALA. Q17 carries the post-translational modification Pyrrolidone carboxylic acid. The region spanning 18 to 658 is the Vitellogenin domain; that stretch reads FQPGKVYRYS…SPSGPLPRAV (641 aa). Residues 953 to 986 are disordered; sequence KGLISQQQQQPHHQQQPHQHGQDQARAAYQRPWA. Over residues 958–976 the composition is skewed to low complexity; that stretch reads QQQQQPHHQQQPHQHGQDQ. N1097 carries N-linked (GlcNAc...) asparagine glycosylation. Residues 1119–1289 form a disordered region; sequence SDKDKDAKKP…SSSSSESKSL (171 aa). Low complexity-rich tracts occupy residues 1128–1149 and 1178–1192; these read PPGS…SSSD and SSSS…SDSS. The span at 1194–1206 shows a compositional bias: basic residues; it reads SPHKHGGAKRQHA. Composition is skewed to low complexity over residues 1217 to 1238 and 1253 to 1286; these read SHSS…KSFS and SSSS…SSES. N1298 carries an N-linked (GlcNAc...) asparagine glycan. Positions 1308-1351 are disordered; the sequence is VPQRKPQTSRRHTPASSSSSSSSSSSSSSSSSSSDSDMTVSAES. A compositionally biased stretch (low complexity) spans 1323-1344; sequence SSSSSSSSSSSSSSSSSSSDSD. Positions 1564-1732 constitute a VWFD domain; it reads SACELNEQSL…SWIAPDETCG (169 aa). 2 disulfides stabilise this stretch: C1566–C1695 and C1589–C1731. N-linked (GlcNAc...) asparagine glycosylation occurs at N1675.

In terms of processing, what corresponds to phosvitin in other species is lost during maturation of vitellogenin to lipovitellin. As to expression, produced by the liver, secreted into the blood and then sequestered by receptor mediated endocytosis into growing oocytes, where it is generally cleaved, giving rise to the respective yolk components lipovitellins 1 and 2.

In terms of biological role, precursor of the major egg-yolk proteins that are sources of nutrients during early development of oviparous organisms. This is Vitellogenin from Ichthyomyzon unicuspis (Silver lamprey).